The chain runs to 93 residues: MEFYLEIDPVTLNLIILVASYVILLLVFLVSCVLYDCRGKDPSKEYAPESTLNAQPSIRVVVTQHSAHASHWARGPSLHLKDPAPLGKKSTVV.

The helical transmembrane segment at 14-34 threads the bilayer; that stretch reads LIILVASYVILLLVFLVSCVL. The tract at residues 70–93 is disordered; sequence SHWARGPSLHLKDPAPLGKKSTVV.

The protein localises to the membrane. The sequence is that of Small integral membrane protein 36 from Mus musculus (Mouse).